Here is a 1021-residue protein sequence, read N- to C-terminus: Collagen alpha-1(I) chain (1021 aa).

Residues 1–1021 (DEKSAGGISV…PGPPGPPGPP (1021 aa)) form a disordered region. Allysine is present on Lys-3. Ser-4 is modified (phosphoserine). Pro-23, Pro-26, Pro-29, Pro-38, Pro-41, Pro-44, Pro-59, Pro-74, Pro-80, Pro-89, and Pro-95 each carry 4-hydroxyproline. Residues 31–50 (PQGFQGPPGEPGEPGASGPM) are compositionally biased toward low complexity. Residues 62–76 (NGDDGEAGKPGRPGE) show a composition bias toward basic and acidic residues. 5-hydroxylysine; alternate is present on Lys-98. An O-linked (Gal...) hydroxylysine; alternate glycan is attached at Lys-98. Position 104 is a phosphoserine (Ser-104). The segment covering 112-128 (DAGPAGPKGEPGSPGEN) has biased composition (low complexity). Pro-122, Pro-125, Pro-131, Pro-140, Pro-146, Pro-167, Pro-176, Pro-179, Pro-206, Pro-209, Pro-221, Pro-227, Pro-236, Pro-242, Pro-245, and Pro-260 each carry 4-hydroxyproline. The span at 146–164 (PGASGPAGARGNDGATGAA) shows a compositional bias: low complexity. Residues 166 to 178 (PPGPTGPAGPPGF) show a composition bias toward pro residues. The span at 212-262 (AGAAGPAGNPGADGQPGAKGANGAPGIAGAPGFPGARGPSGPQGPSGAPGP) shows a compositional bias: low complexity. At Lys-263 the chain carries 5-hydroxylysine. 8 positions are modified to 4-hydroxyproline: Pro-269, Pro-272, Pro-284, Pro-293, Pro-308, Pro-314, Pro-323, and Pro-329. The span at 318 to 327 (GERGGPGSRG) shows a compositional bias: gly residues. Lys-338 carries the post-translational modification 5-hydroxylysine. Residues Pro-347, Pro-356, Pro-362, Pro-368, Pro-377, Pro-380, Pro-389, Pro-398, Pro-404, Pro-416, Pro-425, Pro-434, Pro-437, Pro-455, Pro-472, Pro-478, Pro-484, Pro-490, Pro-496, Pro-502, Pro-514, Pro-523, Pro-534, Pro-546, Pro-549, Pro-555, Pro-561, and Pro-570 each carry the 4-hydroxyproline modification. Residues 371–425 (KGLTGSPGSPGPDGKTGPPGPAGQDGRPGPAGPPGARGQAGVMGFPGPKGAAGEP) are compositionally biased toward low complexity. Residues 484–493 (PGEAGKPGEQ) show a composition bias toward low complexity. Positions 536–558 (NDGAKGDAGAPGAPGSQGAPGLQ) are enriched in low complexity. Residue Lys-582 is modified to 5-hydroxylysine. 2 positions are modified to 4-hydroxyproline: Pro-588 and Pro-603. Residues 615–629 (AGPSGPAGPTGARGA) show a composition bias toward low complexity. Ser-618 is modified (phosphoserine). Pro-630, Pro-636, Pro-639, Pro-648, Pro-654, Pro-681, and Pro-690 each carry 4-hydroxyproline. Low complexity predominate over residues 642–672 (AGFAGPPGADGQPGAKGEPGDAGAKGDAGPS). Residue Lys-693 is modified to 5-hydroxylysine. Residues 698–714 (SAGPPGATGFPGAAGRV) show a composition bias toward low complexity. Pro-702 and Pro-708 each carry 4-hydroxyproline. Pro-716 is subject to 3-hydroxyproline. 16 positions are modified to 4-hydroxyproline: Pro-717, Pro-726, Pro-729, Pro-750, Pro-759, Pro-768, Pro-777, Pro-794, Pro-803, Pro-806, Pro-812, Pro-827, Pro-833, Pro-839, Pro-848, and Pro-854. Residues 743–752 (ETGPAGRPGE) are compositionally biased toward low complexity. A compositionally biased stretch (low complexity) spans 762–777 (SGEKGSPGADGPAGAP). Residues 826 to 836 (PPGPMGPPGLA) are compositionally biased toward pro residues. Residues 838–853 (PPGEAGREGSPGAEGS) are compositionally biased toward low complexity. At Lys-863 the chain carries 5-hydroxylysine. The segment covering 871-886 (PGPPGAPGAPGAPGPV) has biased composition (pro residues). 4-hydroxyproline is present on residues Pro-874, Pro-877, and Pro-880. Residues 907 to 921 (AGPAGARGPAGPQGP) are compositionally biased toward low complexity. Basic and acidic residues predominate over residues 922–936 (RGDKGETGEQGDRGI). Lys-925 carries the post-translational modification 5-hydroxylysine. Lys-937 bears the 5-hydroxylysine; alternate mark. Lys-937 is a glycosylation site (O-linked (Gal...) hydroxylysine; alternate). 4-hydroxyproline is present on residues Pro-952, Pro-955, Pro-973, and Pro-988. Residues 955–988 (PGEQGPSGASGPAGPRGPPGSAGTPGKDGLNGLP) show a composition bias toward low complexity. At Pro-993 the chain carries 3-hydroxyproline. At Pro-994 the chain carries 4-hydroxyproline. Residues 1006–1021 (VGPPGPPGPPGPPGPP) show a composition bias toward pro residues. Residue Pro-1008 is modified to 3-hydroxyproline. Residue Pro-1009 is modified to 4-hydroxyproline. The residue at position 1011 (Pro-1011) is a 3-hydroxyproline. Pro-1012 carries the post-translational modification 4-hydroxyproline. Pro-1014 is subject to 3-hydroxyproline. 4-hydroxyproline is present on residues Pro-1015, Pro-1018, and Pro-1021.

It belongs to the fibrillar collagen family. In terms of assembly, trimers of one alpha 2(I) and two alpha 1(I) chains. In terms of processing, contains mostly 4-hydroxyproline. Proline residues at the third position of the tripeptide repeating unit (G-X-Y) are hydroxylated in some or all of the chains. Post-translationally, contains 3-hydroxyproline at a few sites. This modification occurs on the first proline residue in the sequence motif Gly-Pro-Hyp, where Hyp is 4-hydroxyproline. Lysine residues at the third position of the tripeptide repeating unit (G-X-Y) are 5-hydroxylated in some or all of the chains. In terms of processing, O-glycosylated on hydroxylated lysine residues. The O-linked glycan consists of a Glc-Gal disaccharide. Expressed in bones.

It is found in the secreted. Its subcellular location is the extracellular space. It localises to the extracellular matrix. Functionally, type I collagen is a member of group I collagen (fibrillar forming collagen). In Doedicurus sp. (South American giant glyptodont), this protein is Collagen alpha-1(I) chain.